The chain runs to 385 residues: Type III polyketide synthase C (385 aa).

56–63 (KLQHLCKS) serves as a coordination point for CoA. Cys165 functions as the Nucleophile in the catalytic mechanism. 217–218 (GD) provides a ligand contact to substrate. CoA is bound by residues Leu267, 307–310 (GGPA), and Ala310.

Belongs to the thiolase-like superfamily. Chalcone/stilbene synthases family. As to quaternary structure, homodimer.

It is found in the endoplasmic reticulum. It functions in the pathway secondary metabolite biosynthesis; flavonoid biosynthesis. Plant type III polyketide synthases (PKSs) that catalyzes the condensation of malonyl-CoA units with various CoA ester starter molecules to generate a diverse array of natural products including long-chain alkyl alpha-pyrones. The polypeptide is Type III polyketide synthase C (Arabidopsis thaliana (Mouse-ear cress)).